Consider the following 79-residue polypeptide: Acyl carrier protein (79 aa).

In terms of domain architecture, Carrier spans 2–77 (SEIGERVKKI…DATKFLEKNA (76 aa)). S37 is modified (O-(pantetheine 4'-phosphoryl)serine).

This sequence belongs to the acyl carrier protein (ACP) family. 4'-phosphopantetheine is transferred from CoA to a specific serine of apo-ACP by AcpS. This modification is essential for activity because fatty acids are bound in thioester linkage to the sulfhydryl of the prosthetic group.

It is found in the cytoplasm. It functions in the pathway lipid metabolism; fatty acid biosynthesis. Its function is as follows. Carrier of the growing fatty acid chain in fatty acid biosynthesis. The protein is Acyl carrier protein of Nitrobacter hamburgensis (strain DSM 10229 / NCIMB 13809 / X14).